The primary structure comprises 104 residues: uncharacterized protein (104 aa).

Residues 3-104 (VFEKIIQGEI…HFHILSGDKH (102 aa)) enclose the HIT domain. The short motif at 93–97 (HLHFH) is the Histidine triad motif element.

This is an uncharacterized protein from Helicobacter pylori (strain J99 / ATCC 700824) (Campylobacter pylori J99).